We begin with the raw amino-acid sequence, 180 residues long: Tubulin polymerization-promoting protein homolog (180 aa).

Basic and acidic residues-rich tracts occupy residues 136–158 (TGAH…RADT) and 169–180 (KNKDSYDKTHGK). The tract at residues 136–180 (TGAHKERFDAEGKGKGKSGRADTTENTGYVGAYKNKDSYDKTHGK) is disordered.

This sequence belongs to the TPPP family.

Regulator of microtubule dynamics. This chain is Tubulin polymerization-promoting protein homolog, found in Caenorhabditis elegans.